The primary structure comprises 277 residues: Large ribosomal subunit protein uL2 (277 aa).

Residues 220 to 277 form a disordered region; it reads VRGSVMNPNDHPHGGGEGKAPIGRPSPMSPWGKKTLGKKTRSSKARSEKLIIRHRKSR. The segment covering 254–263 has biased composition (basic residues); it reads TLGKKTRSSK.

The protein belongs to the universal ribosomal protein uL2 family. Part of the 50S ribosomal subunit. Forms a bridge to the 30S subunit in the 70S ribosome.

Functionally, one of the primary rRNA binding proteins. Required for association of the 30S and 50S subunits to form the 70S ribosome, for tRNA binding and peptide bond formation. It has been suggested to have peptidyltransferase activity; this is somewhat controversial. Makes several contacts with the 16S rRNA in the 70S ribosome. The protein is Large ribosomal subunit protein uL2 of Latilactobacillus sakei subsp. sakei (strain 23K) (Lactobacillus sakei subsp. sakei).